The following is a 191-amino-acid chain: MSVKIENIRSELLSKNWFKLHKYTFDLIDDNGTSVQQIREVYDRGNGATILLYNRPNGTVLLINQFRMPTYVNGNPDGMLLETCAGLLDNDSPEECIRREAMEETGYQVDSVQKLFEAYMSPGGVTEIIHFFAAEYHADQKVTDDVGVEDEVIEVVELPFTEAIAMIADGRIKDGKTIMLLQYAQIHGLLK.

Residues 38–40, R67, and 85–87 contribute to the GDP-alpha-D-mannose site; these read IRE and AGL. In terms of domain architecture, Nudix hydrolase spans 43–180; sequence DRGNGATILL…RIKDGKTIML (138 aa). Mg(2+) contacts are provided by A85, E100, and E104. A Nudix box motif is present at residues 86-106; that stretch reads GLLDNDSPEECIRREAMEETG. GDP-alpha-D-mannose is bound by residues E104, E127, 150–151, and K176; that span reads DE. E151 provides a ligand contact to Mg(2+).

Belongs to the Nudix hydrolase family. NudK subfamily. Homodimer. It depends on Mg(2+) as a cofactor.

The catalysed reaction is GDP-alpha-D-mannose + H2O = alpha-D-mannose 1-phosphate + GMP + 2 H(+). Functionally, nucleoside diphosphate sugar hydrolase that hydrolyzes GDP-mannose as its preferred substrate, yielding GMP and mannose-1-phosphate. The polypeptide is GDP-mannose pyrophosphatase (nudK) (Yersinia enterocolitica serotype O:8 / biotype 1B (strain NCTC 13174 / 8081)).